We begin with the raw amino-acid sequence, 60 residues long: Large ribosomal subunit protein bL33 (60 aa).

This sequence belongs to the bacterial ribosomal protein bL33 family.

The polypeptide is Large ribosomal subunit protein bL33 (Pelodictyon phaeoclathratiforme (strain DSM 5477 / BU-1)).